A 65-amino-acid polypeptide reads, in one-letter code: Large ribosomal subunit protein bL35 (65 aa).

It belongs to the bacterial ribosomal protein bL35 family.

The chain is Large ribosomal subunit protein bL35 from Acaryochloris marina (strain MBIC 11017).